The primary structure comprises 387 residues: V-set and immunoglobulin domain-containing protein 1 (387 aa).

Residues 1–21 (MVFAFWKVFLILSCLAGQVSV) form the signal peptide. The Ig-like V-type domain occupies 22–132 (VQVTIPDGFV…DFLGQNQGIL (111 aa)). Residues 22–232 (VQVTIPDGFV…EIDLTSSHPE (211 aa)) lie on the Extracellular side of the membrane. N-linked (GlcNAc...) asparagine glycans are attached at residues N32 and N38. The cysteines at positions 43 and 116 are disulfide-linked. N133, N200, and N219 each carry an N-linked (GlcNAc...) asparagine glycan. The Ig-like C2-type domain maps to 140 to 227 (PSKPLCSVQG…GNSSCEIDLT (88 aa)). A disulfide bond links C161 and C211. The helical transmembrane segment at 233 to 253 (VGIIVGALIGSLVGAAIIISV) threads the bilayer. Residues 254–387 (VCFARNKAKA…SEDEKGVVKA (134 aa)) are Cytoplasmic-facing. The disordered stretch occupies residues 266–387 (KERNSKTIAE…SEDEKGVVKA (122 aa)). Over residues 284–296 (PRGESEAMPREDA) the composition is skewed to basic and acidic residues. Residues 299-308 (LEVTLPSSIH) show a composition bias toward polar residues. Residues 325–335 (TQEPAPEPAPG) show a composition bias toward pro residues. Positions 344–368 (LDIELELEPETQSELEPEPEPEPES) are enriched in acidic residues.

Post-translationally, highly N-glycosylated. Appears not to contain significant amounts of O-linked carbohydrates or sialic acid in its sugar moieties. Detected only in stomach mucosa and testis, and to a much lesser level in pancreas (at protein level). Detected in gastric cancers (31%), esophageal carcinomas (50%) and ovarian cancers (23%).

It localises to the membrane. The polypeptide is V-set and immunoglobulin domain-containing protein 1 (VSIG1) (Homo sapiens (Human)).